We begin with the raw amino-acid sequence, 207 residues long: Serotonin N-acetyltransferase (207 aa).

Position 31 is a phosphothreonine; by PKA (Thr-31). The 162-residue stretch at 35 to 196 (NEFRCLTPKD…TFTEMHCSLR (162 aa)) folds into the N-acetyltransferase domain. Residue Leu-124 participates in substrate binding. Acetyl-CoA contacts are provided by residues 124–126 (LAV) and 132–137 (QQGKGS). Met-159 contributes to the substrate binding site. 168–170 (YQR) is an acetyl-CoA binding site. Ser-205 is modified (phosphoserine).

This sequence belongs to the acetyltransferase family. AANAT subfamily. As to quaternary structure, monomer. Interacts with several 14-3-3 proteins, including YWHAB, YWHAE, YWHAG and YWHAZ, preferentially when phosphorylated at Thr-31. Phosphorylation on Ser-205 also allows binding to YWHAZ, but with lower affinity. The interaction with YWHAZ considerably increases affinity for arylalkylamines and acetyl-CoA and protects the enzyme from dephosphorylation and proteasomal degradation. It may also prevent thiol-dependent inactivation. Post-translationally, cAMP-dependent phosphorylation on both N-terminal Thr-31 and C-terminal Ser-205 regulates AANAT activity by promoting interaction with 14-3-3 proteins. High levels in pineal gland and retina.

The protein resides in the cytoplasm. It carries out the reaction a 2-arylethylamine + acetyl-CoA = an N-acetyl-2-arylethylamine + CoA + H(+). It functions in the pathway aromatic compound metabolism; melatonin biosynthesis; melatonin from serotonin: step 1/2. Functionally, controls the night/day rhythm of melatonin production in the pineal gland. Catalyzes the N-acetylation of serotonin into N-acetylserotonin, the penultimate step in the synthesis of melatonin. The sequence is that of Serotonin N-acetyltransferase (AANAT) from Bos taurus (Bovine).